Reading from the N-terminus, the 111-residue chain is Mitochondrial import inner membrane translocase subunit TIM14 (111 aa).

Topologically, residues 1 to 3 (MTG) are mitochondrial intermembrane. Residues 4–24 (GLIAAGLGLAAVGFGARYVLR) form a helical membrane-spanning segment. Residues 25–111 (NQALIKKGME…AKDLMESTKS (87 aa)) lie on the Mitochondrial matrix side of the membrane. Residues 58–111 (EAAKILGITPSAKPAKIKDAHKKVMIVNHPDRGGSPYLAAKINEAKDLMESTKS) form the J domain.

Belongs to the TIM14 family. In terms of assembly, probable component of the PAM complex at least composed of a mitochondrial HSP70 protein, GrpE, tim-44, tim-16 and tim-14.

It is found in the mitochondrion inner membrane. In terms of biological role, probable component of the PAM complex, a complex required for the translocation of transit peptide-containing proteins from the inner membrane into the mitochondrial matrix in an ATP-dependent manner. May act as a co-chaperone that stimulate the ATP-dependent activity. The chain is Mitochondrial import inner membrane translocase subunit TIM14 (dnj-21) from Caenorhabditis briggsae.